The following is a 351-amino-acid chain: NADP-dependent isopropanol dehydrogenase (351 aa).

4 residues coordinate Zn(2+): C37, H59, E60, and D150. Residues 175–178 (IGAV), 198–200 (GSR), Y218, 265–267 (INY), and K340 contribute to the NADP(+) site.

It belongs to the zinc-containing alcohol dehydrogenase family. In terms of assembly, homotetramer. Zn(2+) is required as a cofactor.

The catalysed reaction is propan-2-ol + NADP(+) = acetone + NADPH + H(+). Alcohol dehydrogenase with a preference for medium chain secondary alcohols, such as 2-butanol and isopropanol. Has very low activity with primary alcohols, such as ethanol. Under physiological conditions, the enzyme reduces aldehydes and 2-ketones to produce secondary alcohols. Is active with acetaldehyde and propionaldehyde. In Clostridium beijerinckii (Clostridium MP), this protein is NADP-dependent isopropanol dehydrogenase (adh).